We begin with the raw amino-acid sequence, 174 residues long: Putative FAS1 domain-containing protein 096L (174 aa).

Residues 36 to 171 form the FAS1 domain; the sequence is PDTLWSKLNE…GIIHLMEEVY (136 aa).

In Acheta domesticus (House cricket), this protein is Putative FAS1 domain-containing protein 096L.